A 261-amino-acid polypeptide reads, in one-letter code: Indole-3-glycerol phosphate synthase (261 aa).

This sequence belongs to the TrpC family.

The catalysed reaction is 1-(2-carboxyphenylamino)-1-deoxy-D-ribulose 5-phosphate + H(+) = (1S,2R)-1-C-(indol-3-yl)glycerol 3-phosphate + CO2 + H2O. The protein operates within amino-acid biosynthesis; L-tryptophan biosynthesis; L-tryptophan from chorismate: step 4/5. This chain is Indole-3-glycerol phosphate synthase, found in Burkholderia vietnamiensis (strain G4 / LMG 22486) (Burkholderia cepacia (strain R1808)).